Here is a 274-residue protein sequence, read N- to C-terminus: Diaminopimelate epimerase (274 aa).

Residues N11, Q44, and N64 each coordinate substrate. C73 functions as the Proton donor in the catalytic mechanism. Substrate contacts are provided by residues 74–75 (GN), N157, N190, and 208–209 (ER). Residue C217 is the Proton acceptor of the active site. 218–219 (GS) is a substrate binding site.

Belongs to the diaminopimelate epimerase family. In terms of assembly, homodimer.

It is found in the cytoplasm. It carries out the reaction (2S,6S)-2,6-diaminopimelate = meso-2,6-diaminopimelate. It functions in the pathway amino-acid biosynthesis; L-lysine biosynthesis via DAP pathway; DL-2,6-diaminopimelate from LL-2,6-diaminopimelate: step 1/1. Catalyzes the stereoinversion of LL-2,6-diaminopimelate (L,L-DAP) to meso-diaminopimelate (meso-DAP), a precursor of L-lysine and an essential component of the bacterial peptidoglycan. This Serratia proteamaculans (strain 568) protein is Diaminopimelate epimerase.